The chain runs to 182 residues: Large ribosomal subunit protein uL5 (182 aa).

The protein belongs to the universal ribosomal protein uL5 family. Part of the 50S ribosomal subunit; part of the 5S rRNA/L5/L18/L25 subcomplex. Contacts the 5S rRNA and the P site tRNA. Forms a bridge to the 30S subunit in the 70S ribosome.

Functionally, this is one of the proteins that bind and probably mediate the attachment of the 5S RNA into the large ribosomal subunit, where it forms part of the central protuberance. In the 70S ribosome it contacts protein S13 of the 30S subunit (bridge B1b), connecting the 2 subunits; this bridge is implicated in subunit movement. Contacts the P site tRNA; the 5S rRNA and some of its associated proteins might help stabilize positioning of ribosome-bound tRNAs. This is Large ribosomal subunit protein uL5 from Leptospira interrogans serogroup Icterohaemorrhagiae serovar copenhageni (strain Fiocruz L1-130).